A 748-amino-acid polypeptide reads, in one-letter code: Basic juvenile hormone-suppressible protein 1 (748 aa).

The N-terminal stretch at 1–17 (MRVLVLVASLGLRGSVV) is a signal peptide.

The protein belongs to the hemocyanin family. In terms of tissue distribution, fat body, and hemolymph of larvae.

This is Basic juvenile hormone-suppressible protein 1 (BJSP-1) from Trichoplusia ni (Cabbage looper).